The chain runs to 348 residues: Anthranilate phosphoribosyltransferase (348 aa).

Residues Gly-81, 84-85 (GD), 91-94 (NVST), 109-117 (KHGNRAVSG), and Ser-121 contribute to the 5-phospho-alpha-D-ribose 1-diphosphate site. Gly-81 provides a ligand contact to anthranilate. Ser-93 contributes to the Mg(2+) binding site. Residue Asn-112 participates in anthranilate binding. Arg-167 contacts anthranilate. Mg(2+) contacts are provided by Asp-226 and Glu-227.

It belongs to the anthranilate phosphoribosyltransferase family. As to quaternary structure, homodimer. Mg(2+) serves as cofactor.

The catalysed reaction is N-(5-phospho-beta-D-ribosyl)anthranilate + diphosphate = 5-phospho-alpha-D-ribose 1-diphosphate + anthranilate. It functions in the pathway amino-acid biosynthesis; L-tryptophan biosynthesis; L-tryptophan from chorismate: step 2/5. Functionally, catalyzes the transfer of the phosphoribosyl group of 5-phosphorylribose-1-pyrophosphate (PRPP) to anthranilate to yield N-(5'-phosphoribosyl)-anthranilate (PRA). This chain is Anthranilate phosphoribosyltransferase, found in Stutzerimonas stutzeri (strain A1501) (Pseudomonas stutzeri).